A 276-amino-acid chain; its full sequence is Probable endonuclease 4 (276 aa).

Zn(2+) contacts are provided by His-67, His-107, Glu-142, Asp-176, His-179, His-211, Asp-224, His-226, and Glu-256.

This sequence belongs to the AP endonuclease 2 family. It depends on Zn(2+) as a cofactor.

It catalyses the reaction Endonucleolytic cleavage to 5'-phosphooligonucleotide end-products.. Endonuclease IV plays a role in DNA repair. It cleaves phosphodiester bonds at apurinic or apyrimidinic (AP) sites, generating a 3'-hydroxyl group and a 5'-terminal sugar phosphate. This Methanosphaera stadtmanae (strain ATCC 43021 / DSM 3091 / JCM 11832 / MCB-3) protein is Probable endonuclease 4.